Consider the following 35-residue polypeptide: Phosphoribulokinase (35 aa).

It belongs to the phosphoribulokinase family.

The protein localises to the plastid. It is found in the chloroplast. The catalysed reaction is D-ribulose 5-phosphate + ATP = D-ribulose 1,5-bisphosphate + ADP + H(+). The protein operates within carbohydrate biosynthesis; Calvin cycle. With respect to regulation, light regulated via thioredoxin by reversible oxidation/reduction of sulfhydryl/disulfide groups. This Pinus pinaster (Maritime pine) protein is Phosphoribulokinase.